A 330-amino-acid chain; its full sequence is Ketol-acid reductoisomerase (NADP(+)) (330 aa).

In terms of domain architecture, KARI N-terminal Rossmann spans 3–184 (LSVYYDKDID…GGGRMGVLET (182 aa)). NADP(+) is bound by residues 26–29 (YGTQ), Ser-52, and Ser-54. The active site involves His-109. Gly-135 lines the NADP(+) pocket. A KARI C-terminal knotted domain is found at 185–329 (SFKEECESDL…EILRTPFNHE (145 aa)). Mg(2+) is bound by residues Asp-193, Glu-197, Glu-229, and Glu-233. Ser-254 is a substrate binding site.

The protein belongs to the ketol-acid reductoisomerase family. It depends on Mg(2+) as a cofactor.

It carries out the reaction (2R)-2,3-dihydroxy-3-methylbutanoate + NADP(+) = (2S)-2-acetolactate + NADPH + H(+). The enzyme catalyses (2R,3R)-2,3-dihydroxy-3-methylpentanoate + NADP(+) = (S)-2-ethyl-2-hydroxy-3-oxobutanoate + NADPH + H(+). The protein operates within amino-acid biosynthesis; L-isoleucine biosynthesis; L-isoleucine from 2-oxobutanoate: step 2/4. It participates in amino-acid biosynthesis; L-valine biosynthesis; L-valine from pyruvate: step 2/4. In terms of biological role, involved in the biosynthesis of branched-chain amino acids (BCAA). Catalyzes an alkyl-migration followed by a ketol-acid reduction of (S)-2-acetolactate (S2AL) to yield (R)-2,3-dihydroxy-isovalerate. In the isomerase reaction, S2AL is rearranged via a Mg-dependent methyl migration to produce 3-hydroxy-3-methyl-2-ketobutyrate (HMKB). In the reductase reaction, this 2-ketoacid undergoes a metal-dependent reduction by NADPH to yield (R)-2,3-dihydroxy-isovalerate. This chain is Ketol-acid reductoisomerase (NADP(+)), found in Helicobacter acinonychis (strain Sheeba).